We begin with the raw amino-acid sequence, 215 residues long: Large ribosomal subunit protein uL3 (215 aa).

At Q156 the chain carries N5-methylglutamine.

The protein belongs to the universal ribosomal protein uL3 family. As to quaternary structure, part of the 50S ribosomal subunit. Forms a cluster with proteins L14 and L19. Post-translationally, methylated by PrmB.

One of the primary rRNA binding proteins, it binds directly near the 3'-end of the 23S rRNA, where it nucleates assembly of the 50S subunit. The protein is Large ribosomal subunit protein uL3 of Xylella fastidiosa (strain 9a5c).